Consider the following 465-residue polypeptide: MSCLRQSSQSFYFTQIRWKTVKFKTKIAKTKPLKTPSAQALDHFDFYYGPLFGKKWPSIRLGLLSPNRYLAVMNTMSRNWQAHDEILSDMGAKDLLASIRGKAEDQAIETKRKSVEEKANRETQKVKHEISNPSTSTNTEDSEPDEAIFRSAAGLGEFRASAGELSSGSLQMGLGQSNQNKNVEITGFEGEGVRIPKRDHFFYYPQALHVRSFDRAVLLDFPAPMKDEVGVPSYWLLDGGSLLPVLALGLQKDDSLLDMCAAPGGKSLLAALSNLPSKIVCNDFKLARLGQLKRALMTYVPEDSETIDKFVLKRKDASDVKTWDEFEAYDKVLVDVPCSTDRLSVSTDDGNLFSTGSTQQRLDLPVLQTKILVNALRSVKVGGSVVYSTCTLSPSQNEAVVENAVAVVRNDFGIVTVEESLHQLVSHMTSSGLYRFHDTPLGALVVPFLPSNFGPMYICKLTRLQ.

The N-terminal 6 residues, 1 to 6 (MSCLRQ), are a transit peptide targeting the mitochondrion. Basic and acidic residues predominate over residues 106-130 (QAIETKRKSVEEKANRETQKVKHEI). Residues 106–145 (QAIETKRKSVEEKANRETQKVKHEISNPSTSTNTEDSEPD) form a disordered region. Residues 260–266 (CAAPGGK), aspartate 283, aspartate 316, and aspartate 335 each bind S-adenosyl-L-methionine. The active-site Nucleophile is cysteine 390.

The protein belongs to the class I-like SAM-binding methyltransferase superfamily. RsmB/NOP family.

The protein localises to the mitochondrion. The catalysed reaction is a cytidine in rRNA + S-adenosyl-L-methionine = a 5-methylcytidine in rRNA + S-adenosyl-L-homocysteine + H(+). It carries out the reaction a cytidine in tRNA + S-adenosyl-L-methionine = a 5-methylcytidine in tRNA + S-adenosyl-L-homocysteine + H(+). Mitochondrial methyltransferase which methylates cytosine to 5-methylcytosine (m5C) in rRNAs and tRNAs at multiple sites. May play a role in the translation of leucine and proline codons. This chain is 5-cytosine rRNA methyltransferase nsun-4, found in Caenorhabditis elegans.